Consider the following 157-residue polypeptide: S-ribosylhomocysteine lyase (157 aa).

3 residues coordinate Fe cation: histidine 54, histidine 58, and cysteine 126.

It belongs to the LuxS family. In terms of assembly, homodimer. Fe cation serves as cofactor.

It catalyses the reaction S-(5-deoxy-D-ribos-5-yl)-L-homocysteine = (S)-4,5-dihydroxypentane-2,3-dione + L-homocysteine. Involved in the synthesis of autoinducer 2 (AI-2) which is secreted by bacteria and is used to communicate both the cell density and the metabolic potential of the environment. The regulation of gene expression in response to changes in cell density is called quorum sensing. Catalyzes the transformation of S-ribosylhomocysteine (RHC) to homocysteine (HC) and 4,5-dihydroxy-2,3-pentadione (DPD). This Bacillus cereus (strain G9842) protein is S-ribosylhomocysteine lyase.